The chain runs to 114 residues: Transmembrane protein 14B (114 aa).

The next 4 helical transmembrane spans lie at 8 to 28 (LVPL…GGIV), 34 to 54 (GSVP…LGAY), 60 to 80 (PRNV…VMGM), and 83 to 103 (YYYG…LMAA).

This sequence belongs to the TMEM14 family. Interacts with IQGAP1; this interaction promotes phosphorylation and nuclear translocation of IQGAP1. As to expression, mainly expressed in the outer subventricular zone (OSVZ) of the fetal brains.

It localises to the membrane. Its function is as follows. Primate-specific protein involved in cortical expansion and folding in the developing neocortex. May drive neural progenitor proliferation through nuclear translocation of IQGAP1, which in turn promotes G1/S cell cycle transitions. This Homo sapiens (Human) protein is Transmembrane protein 14B (TMEM14B).